The primary structure comprises 34 residues: Photosystem II reaction center protein M (34 aa).

Residues 7 to 27 form a helical membrane-spanning segment; the sequence is GFVASLMFILVPAIFLIVLYI.

The protein belongs to the PsbM family. In terms of assembly, PSII is composed of 1 copy each of membrane proteins PsbA, PsbB, PsbC, PsbD, PsbE, PsbF, PsbH, PsbI, PsbJ, PsbK, PsbL, PsbM, PsbT, PsbX, PsbY, PsbZ, Psb30/Ycf12, peripheral proteins PsbO, CyanoQ (PsbQ), PsbU, PsbV and a large number of cofactors. It forms dimeric complexes.

It is found in the cellular thylakoid membrane. Its function is as follows. One of the components of the core complex of photosystem II (PSII). PSII is a light-driven water:plastoquinone oxidoreductase that uses light energy to abstract electrons from H(2)O, generating O(2) and a proton gradient subsequently used for ATP formation. It consists of a core antenna complex that captures photons, and an electron transfer chain that converts photonic excitation into a charge separation. This subunit is found at the monomer-monomer interface. This chain is Photosystem II reaction center protein M, found in Synechococcus sp. (strain CC9902).